A 454-amino-acid polypeptide reads, in one-letter code: Alpha-1,3-mannosyl-glycoprotein 4-beta-N-acetylglucosaminyltransferase C (454 aa).

The Cytoplasmic portion of the chain corresponds to 1–6 (MRCHLK). The chain crosses the membrane as a helical; Signal-anchor for type II membrane protein span at residues 7–24 (KWVVVAAGLSILTSLYVY). The Lumenal segment spans residues 25-454 (MQRAQSGNLK…VWTVKEDKTI (430 aa)). N-linked (GlcNAc...) asparagine glycans are attached at residues Asn-58 and Asn-189.

It belongs to the glycosyltransferase 54 family. The cofactor is a divalent metal cation.

It localises to the golgi apparatus membrane. It carries out the reaction N(4)-{beta-D-GlcNAc-(1-&gt;2)-alpha-D-Man-(1-&gt;3)-[beta-D-GlcNAc-(1-&gt;2)-alpha-D-Man-(1-&gt;6)]-beta-D-Man-(1-&gt;4)-beta-D-GlcNAc-(1-&gt;4)-beta-D-GlcNAc}-L-asparaginyl-[protein] + UDP-N-acetyl-alpha-D-glucosamine = N(4)-{beta-D-GlcNAc-(1-&gt;2)-[beta-D-GlcNAc-(1-&gt;4)]-alpha-D-Man-(1-&gt;3)-[beta-D-GlcNAc-(1-&gt;2)-alpha-D-Man-(1-&gt;6)]-beta-D-Man-(1-&gt;4)-beta-D-GlcNAc-(1-&gt;4)-beta-D-GlcNAc}-L-asparaginyl-[protein] + UDP + H(+). The protein operates within protein modification; protein glycosylation. In terms of biological role, glycosyltransferase that participates in the transfer of N-acetylglucosamine (GlcNAc) to the core mannose residues of N-linked glycans. Catalyzes the formation of the GlcNAcbeta1-4 branch on the GlcNAcbeta1-2Manalpha1-3 arm of the core structure of N-linked glycans. This chain is Alpha-1,3-mannosyl-glycoprotein 4-beta-N-acetylglucosaminyltransferase C (mgat4c), found in Danio rerio (Zebrafish).